The following is a 144-amino-acid chain: Large ribosomal subunit protein uL13 (144 aa).

Belongs to the universal ribosomal protein uL13 family. As to quaternary structure, part of the 50S ribosomal subunit.

This protein is one of the early assembly proteins of the 50S ribosomal subunit, although it is not seen to bind rRNA by itself. It is important during the early stages of 50S assembly. The sequence is that of Large ribosomal subunit protein uL13 from Mycoplasmopsis synoviae (strain 53) (Mycoplasma synoviae).